The primary structure comprises 258 residues: Acyl-[acyl-carrier-protein]--UDP-N-acetylglucosamine O-acyltransferase (258 aa).

Belongs to the transferase hexapeptide repeat family. LpxA subfamily. In terms of assembly, homotrimer.

The protein localises to the cytoplasm. The catalysed reaction is a (3R)-hydroxyacyl-[ACP] + UDP-N-acetyl-alpha-D-glucosamine = a UDP-3-O-[(3R)-3-hydroxyacyl]-N-acetyl-alpha-D-glucosamine + holo-[ACP]. Its pathway is glycolipid biosynthesis; lipid IV(A) biosynthesis; lipid IV(A) from (3R)-3-hydroxytetradecanoyl-[acyl-carrier-protein] and UDP-N-acetyl-alpha-D-glucosamine: step 1/6. Involved in the biosynthesis of lipid A, a phosphorylated glycolipid that anchors the lipopolysaccharide to the outer membrane of the cell. In Azotobacter vinelandii (strain DJ / ATCC BAA-1303), this protein is Acyl-[acyl-carrier-protein]--UDP-N-acetylglucosamine O-acyltransferase.